A 292-amino-acid polypeptide reads, in one-letter code: Formamidopyrimidine-DNA glycosylase (292 aa).

The Schiff-base intermediate with DNA role is filled by Pro2. The active-site Proton donor is Glu3. The active-site Proton donor; for beta-elimination activity is the Lys58. Positions 103, 122, and 165 each coordinate DNA. Residues 256–292 (RVYDRALHPCPTPGCKGEISRITQGGRSSFFCSMCQK) form an FPG-type zinc finger. Catalysis depends on Arg282, which acts as the Proton donor; for delta-elimination activity.

This sequence belongs to the FPG family. Monomer. Requires Zn(2+) as cofactor.

The enzyme catalyses Hydrolysis of DNA containing ring-opened 7-methylguanine residues, releasing 2,6-diamino-4-hydroxy-5-(N-methyl)formamidopyrimidine.. It catalyses the reaction 2'-deoxyribonucleotide-(2'-deoxyribose 5'-phosphate)-2'-deoxyribonucleotide-DNA = a 3'-end 2'-deoxyribonucleotide-(2,3-dehydro-2,3-deoxyribose 5'-phosphate)-DNA + a 5'-end 5'-phospho-2'-deoxyribonucleoside-DNA + H(+). Its function is as follows. Involved in base excision repair of DNA damaged by oxidation or by mutagenic agents. Acts as a DNA glycosylase that recognizes and removes damaged bases. Has a preference for oxidized purines, such as 7,8-dihydro-8-oxoguanine (8-oxoG). Has AP (apurinic/apyrimidinic) lyase activity and introduces nicks in the DNA strand. Cleaves the DNA backbone by beta-delta elimination to generate a single-strand break at the site of the removed base with both 3'- and 5'-phosphates. In Methylocella silvestris (strain DSM 15510 / CIP 108128 / LMG 27833 / NCIMB 13906 / BL2), this protein is Formamidopyrimidine-DNA glycosylase.